The sequence spans 274 residues: TATA box-binding protein-associated factor RNA polymerase I subunit D (274 aa).

Residues 1–19 are compositionally biased toward polar residues; it reads MDSLNYTTACDSAVETENQ. Disordered regions lie at residues 1 to 45 and 84 to 111; these read MDSL…RQRN and NKKRKRKKKKYKPTGRSVGRPKGRRTTR. Phosphoserine is present on serine 20. Basic residues predominate over residues 84 to 110; the sequence is NKKRKRKKKKYKPTGRSVGRPKGRRTT. Serine 132 and serine 229 each carry phosphoserine.

As to quaternary structure, component of the transcription factor SL1/TIF-IB complex, composed of TBP and at least TAF1A, TAF1B, TAF1C and TAF1D. Interacts with UBTF.

It is found in the nucleus. Component of the transcription factor SL1/TIF-IB complex, which is involved in the assembly of the PIC (preinitiation complex) during RNA polymerase I-dependent transcription. The rate of PIC formation probably is primarily dependent on the rate of association of SL1/TIF-IB with the rDNA promoter. SL1/TIF-IB is involved in stabilization of nucleolar transcription factor 1/UBTF on rDNA. Formation of SL1/TIF-IB excludes the association of TBP with TFIID subunits. The chain is TATA box-binding protein-associated factor RNA polymerase I subunit D (TAF1D) from Bos taurus (Bovine).